The following is a 176-amino-acid chain: Membrane glycoprotein UL144 (176 aa).

An N-terminal signal peptide occupies residues methionine 1–threonine 20. One copy of the TNFR-Cys repeat lies at proline 58–cysteine 95. 3 cysteine pairs are disulfide-bonded: cysteine 59–cysteine 71, cysteine 74–cysteine 87, and cysteine 77–cysteine 95. The chain crosses the membrane as a helical span at residues leucine 134–isoleucine 154.

In terms of assembly, interacts with host TRIM23; this interaction causes auto-ubiquitination of TRAF6, leading to NF-kappaB activation.

The protein resides in the membrane. Functionally, activates NF-kappa-B in a tumor necrosis factor receptor (TNFR)-associated factor 6 (TRAF6)-dependent manner, causing the up-regulation of the chemokine CCL22. The chain is Membrane glycoprotein UL144 (UL144) from Human cytomegalovirus (strain Merlin) (HHV-5).